We begin with the raw amino-acid sequence, 334 residues long: MNLSLVLAAFCLGIASAVPKFDQNLDTKWYQWKATHRRLYGANEEGWRRAVWEKNMKMIELHNGEYSQGKHGFTMAMNAFGDMTNEEFRQMMGCFRNQKFRKGKVFREPLFLDLPKSVDWRKKGYVTPVKNQKQCGSCWAFSATGALEGQMFRKTGKLVSLSEQNLVDCSRPQGNQGCNGGFMARAFQYVKENGGLDSEESYPYVAVDEICKYRPENSVANDTGFTVVAPGKEKALMKAVATVGPISVAMDAGHSSFQFYKSGIYFEPDCSSKNLDHGVLVVGYGFEGANSNNSKYWLVKNSWGPEWGSNGYVKIAKDKNNHCGIATAASYPNV.

Residues 1–17 (MNLSLVLAAFCLGIASA) form the signal peptide. Residues 18-113 (VPKFDQNLDT…KVFREPLFLD (96 aa)) constitute a propeptide, activation peptide. Intrachain disulfides connect Cys-135–Cys-178 and Cys-169–Cys-211. Cys-138 is a catalytic residue. N-linked (GlcNAc...) asparagine glycosylation occurs at Asn-221. Cys-270 and Cys-323 are disulfide-bonded. Residue His-277 is part of the active site. Residue Asn-292 is glycosylated (N-linked (GlcNAc...) asparagine). Residue Asn-301 is part of the active site.

The protein belongs to the peptidase C1 family. In terms of tissue distribution, predominantly expressed in the thymus and testis. Also expressed in corneal epithelium, and to a lesser extent in conjunctival epithelium and skin.

It is found in the lysosome. It catalyses the reaction The recombinant enzyme hydrolyzes proteins (serum albumin, collagen) and synthetic substrates (Z-Phe-Arg-NHMec &gt; Z-Leu-Arg-NHMec &gt; Z-Val-Arg-NHMec).. With respect to regulation, inhibited by CST6. In terms of biological role, cysteine protease. May have an important role in corneal physiology. This Homo sapiens (Human) protein is Cathepsin L2 (CTSV).